Reading from the N-terminus, the 498-residue chain is MESPRGWTLQVAPEEGQVLCNVKTATRGLSEGAVSGGWGAWENSTEVPREAGDGQRQQATLGAADEQGGPGRELGPADGGRDGAGPRSEPADRALRPSPLPEEPGCRCGECGKAFSQGSYLLQHRRVHTGEKPYTCPECGKAFAWSSNLSQHQRIHSGEKPYACRECGKAFRAHSQLIHHQETHSGLKPFRCPDCGKSFGRSTTLVQHRRTHTGEKPYECPECGKAFSWNSNFLEHRRVHTGARPHACRDCGKAFSQSSNLAEHLKIHAGARPHACPDCGKAFVRVAGLRQHRRTHSSEKPFPCAECGKAFRESSQLLQHQRTHTGERPFECAECGQAFVMGSYLAEHRRVHTGEKPHACAQCGKAFSQRSNLLSHRRTHSGAKPFACADCGKAFRGSSGLAHHRLSHTGERPFACAECGKAFRGSSELRQHQRLHSGERPFVCAHCSKAFVRKSELLSHRRTHTGERPYACGECGKPFSHRCNLNEHQKRHGGRAAP.

Residues 30-104 are disordered; sequence SEGAVSGGWG…LRPSPLPEEP (75 aa). 14 consecutive C2H2-type zinc fingers follow at residues 106 to 128, 134 to 156, 162 to 184, 190 to 212, 218 to 240, 246 to 268, 274 to 296, 302 to 324, 330 to 352, 358 to 380, 386 to 408, 414 to 436, 442 to 464, and 470 to 492; these read CRCG…RRVH, YTCP…QRIH, YACR…QETH, FRCP…RRTH, YECP…RRVH, HACR…LKIH, HACP…RRTH, FPCA…QRTH, FECA…RRVH, HACA…RRTH, FACA…RLSH, FACA…QRLH, FVCA…RRTH, and YACG…QKRH.

Belongs to the krueppel C2H2-type zinc-finger protein family.

It is found in the nucleus. In terms of biological role, may be involved in transcriptional regulation. The polypeptide is Zinc finger protein 497 (ZNF497) (Homo sapiens (Human)).